A 423-amino-acid chain; its full sequence is uncharacterized protein (423 aa).

Substrate contacts are provided by serine 51, aspartate 138, and asparagine 150. Residues 170–171 and 214–220 contribute to the ATP site; these read TD and TGGMRTK. The 92-residue stretch at 315–406 folds into the PUA domain; it reads KGAIIIDENS…EKIHDVLGYS (92 aa).

The protein belongs to the glutamate 5-kinase family.

The protein localises to the cytoplasm. This is an uncharacterized protein from Saccharomyces cerevisiae (strain ATCC 204508 / S288c) (Baker's yeast).